A 437-amino-acid polypeptide reads, in one-letter code: Elongation factor 1-alpha (437 aa).

The tr-type G domain occupies 4 to 229 (KPHMNLVVIG…DQLQPPAKPV (226 aa)). The tract at residues 13–20 (GHVDHGKS) is G1. 13–20 (GHVDHGKS) is a binding site for GTP. Ser20 serves as a coordination point for Mg(2+). Positions 69–73 (GITID) are G2. Positions 90-93 (DAPG) are G3. Residues 90 to 94 (DAPGH) and 152 to 155 (NKMD) contribute to the GTP site. The G4 stretch occupies residues 152–155 (NKMD). A G5 region spans residues 193–195 (SAW).

It belongs to the TRAFAC class translation factor GTPase superfamily. Classic translation factor GTPase family. EF-Tu/EF-1A subfamily.

The protein localises to the cytoplasm. The catalysed reaction is GTP + H2O = GDP + phosphate + H(+). In terms of biological role, GTP hydrolase that promotes the GTP-dependent binding of aminoacyl-tRNA to the A-site of ribosomes during protein biosynthesis. The sequence is that of Elongation factor 1-alpha from Aeropyrum pernix (strain ATCC 700893 / DSM 11879 / JCM 9820 / NBRC 100138 / K1).